Here is a 278-residue protein sequence, read N- to C-terminus: 4-deoxy-L-threo-5-hexosulose-uronate ketol-isomerase (278 aa).

4 residues coordinate Zn(2+): histidine 196, histidine 198, glutamate 203, and histidine 245.

The protein belongs to the KduI family. As to quaternary structure, homohexamer. The cofactor is Zn(2+).

It catalyses the reaction 5-dehydro-4-deoxy-D-glucuronate = 3-deoxy-D-glycero-2,5-hexodiulosonate. It participates in glycan metabolism; pectin degradation; 2-dehydro-3-deoxy-D-gluconate from pectin: step 4/5. Its function is as follows. Catalyzes the isomerization of 5-dehydro-4-deoxy-D-glucuronate to 3-deoxy-D-glycero-2,5-hexodiulosonate. This Escherichia coli (strain SMS-3-5 / SECEC) protein is 4-deoxy-L-threo-5-hexosulose-uronate ketol-isomerase.